The sequence spans 221 residues: ATP phosphoribosyltransferase (221 aa).

This sequence belongs to the ATP phosphoribosyltransferase family. Short subfamily. In terms of assembly, heteromultimer composed of HisG and HisZ subunits.

It localises to the cytoplasm. The catalysed reaction is 1-(5-phospho-beta-D-ribosyl)-ATP + diphosphate = 5-phospho-alpha-D-ribose 1-diphosphate + ATP. Its pathway is amino-acid biosynthesis; L-histidine biosynthesis; L-histidine from 5-phospho-alpha-D-ribose 1-diphosphate: step 1/9. Its function is as follows. Catalyzes the condensation of ATP and 5-phosphoribose 1-diphosphate to form N'-(5'-phosphoribosyl)-ATP (PR-ATP). Has a crucial role in the pathway because the rate of histidine biosynthesis seems to be controlled primarily by regulation of HisG enzymatic activity. The chain is ATP phosphoribosyltransferase from Anaeromyxobacter sp. (strain K).